A 396-amino-acid polypeptide reads, in one-letter code: NADH-quinone oxidoreductase subunit D (396 aa).

The protein belongs to the complex I 49 kDa subunit family. NDH-1 is composed of 14 different subunits. Subunits NuoB, C, D, E, F, and G constitute the peripheral sector of the complex.

The protein resides in the cell inner membrane. It catalyses the reaction a quinone + NADH + 5 H(+)(in) = a quinol + NAD(+) + 4 H(+)(out). Its function is as follows. NDH-1 shuttles electrons from NADH, via FMN and iron-sulfur (Fe-S) centers, to quinones in the respiratory chain. The immediate electron acceptor for the enzyme in this species is believed to be ubiquinone. Couples the redox reaction to proton translocation (for every two electrons transferred, four hydrogen ions are translocated across the cytoplasmic membrane), and thus conserves the redox energy in a proton gradient. The chain is NADH-quinone oxidoreductase subunit D from Mesorhizobium japonicum (strain LMG 29417 / CECT 9101 / MAFF 303099) (Mesorhizobium loti (strain MAFF 303099)).